The primary structure comprises 143 residues: Large ribosomal subunit protein uL15 (143 aa).

The interval 1-52 (MKLNTLAPAAGSKSAPKRLGRGIGSGLGKTSGKGHKGQKARSGGYHKVGFEG) is disordered. The segment covering 21–31 (RGIGSGLGKTS) has biased composition (gly residues).

It belongs to the universal ribosomal protein uL15 family. Part of the 50S ribosomal subunit.

Functionally, binds to the 23S rRNA. The sequence is that of Large ribosomal subunit protein uL15 from Francisella tularensis subsp. mediasiatica (strain FSC147).